A 75-amino-acid chain; its full sequence is uncharacterized protein (75 aa).

The signal sequence occupies residues 1–19; the sequence is MKKTAAIISACMLTFALSA. Cys-20 carries N-palmitoyl cysteine lipidation. Cys-20 carries the S-diacylglycerol cysteine lipid modification.

It to E.coli YgdR.

It is found in the cell membrane. This is an uncharacterized protein from Escherichia coli O6:H1 (strain CFT073 / ATCC 700928 / UPEC).